Reading from the N-terminus, the 504-residue chain is Lysine--tRNA ligase (504 aa).

The 'HIGH' region motif lies at 23–31 (PSGPIHIGN).

It belongs to the class-I aminoacyl-tRNA synthetase family.

The protein localises to the cytoplasm. It catalyses the reaction tRNA(Lys) + L-lysine + ATP = L-lysyl-tRNA(Lys) + AMP + diphosphate. This Picrophilus torridus (strain ATCC 700027 / DSM 9790 / JCM 10055 / NBRC 100828 / KAW 2/3) protein is Lysine--tRNA ligase.